Here is a 509-residue protein sequence, read N- to C-terminus: Zinc finger protein Aiolos (509 aa).

A disordered region spans residues 1-85; sequence MEDIKPNVEL…PMGNAEEPEI (85 aa). The span at 10-20 shows a compositional bias: polar residues; sequence LKSTQEQSVPT. T20 bears the Phosphothreonine mark. Over residues 56–72 the composition is skewed to basic and acidic residues; that stretch reads DSMKVKDEYSERDENVL. Residues K61, K73, and K100 each participate in a glycyl lysine isopeptide (Lys-Gly) (interchain with G-Cter in SUMO2) cross-link. C2H2-type zinc fingers lie at residues 118 to 140, 146 to 168, and 174 to 196; these read MNCD…KRSH, FQCN…IKLH, and FKCH…LRTH. The C2H2-type 4; atypical zinc-finger motif lies at 202-224; it reads YKCEFCGRSYKQRSSLEEHKERC. K245 participates in a covalent cross-link: Glycyl lysine isopeptide (Lys-Gly) (interchain with G-Cter in SUMO2). Residue T326 is modified to Phosphothreonine. The segment at 365 to 421 is disordered; that stretch reads HLPEKSLPSERGLSPTNSGHDSTDTDSNHEERQNHIYQQNPMVPPRARNGMPLLKEG. A Phosphoserine modification is found at S378. The segment covering 385-398 has biased composition (basic and acidic residues); that stretch reads DSTDTDSNHEERQN. A C2H2-type 5 zinc finger spans residues 452 to 474; it reads YRCDHCRVLFLDYVMFTIHMGCH. A mediates homodimerization and heterodimerization region spans residues 452–504; it reads YRCDHCRVLFLDYVMFTIHMGCHGFRDPFECNMCGYRSHDRYEFSSHIARGEH. Residues 480–504 form a C2H2-type 6; atypical zinc finger; the sequence is FECNMCGYRSHDRYEFSSHIARGEH.

It belongs to the Ikaros C2H2-type zinc-finger protein family. In terms of assembly, homodimer. Heterodimer with other IKAROS family members. Interacts with IKZF4 and IKZF5. Interacts with IKZF1. Interacts with HRAS. Interacts with FOXP3; this interaction may be required for silencing target genes and regulating the suppressive activity of FOXP3-positive regulatory T-cells (Treg). Interacts with BCL21L; this interaction blocks the anti-apoptotic role of BCL21L. Associates with histone deacetylase complexes containing HDAC1, MTA2 and SIN3A.

The protein localises to the nucleus. It localises to the cytoplasm. Transcription factor that plays an important role in the regulation of lymphocyte differentiation. Plays an essential role in regulation of B-cell differentiation, proliferation and maturation to an effector state. Involved in regulating BCL2 expression and controlling apoptosis in T-cells in an IL2-dependent manner. This Bos taurus (Bovine) protein is Zinc finger protein Aiolos (IKZF3).